Here is a 222-residue protein sequence, read N- to C-terminus: UPF0758 protein HSM_0009 (222 aa).

Positions 99 to 222 (QEFTSPDTVR…YFSFAEQGWI (124 aa)) constitute an MPN domain. Residues H171, H173, and D184 each coordinate Zn(2+). Positions 171–184 (HNHPSGVSTPSMAD) match the JAMM motif motif.

Belongs to the UPF0758 family.

The protein is UPF0758 protein HSM_0009 of Histophilus somni (strain 2336) (Haemophilus somnus).